Here is a 198-residue protein sequence, read N- to C-terminus: FMN-dependent NADH:quinone oxidoreductase 2 (198 aa).

136 to 139 (SRGG) serves as a coordination point for FMN.

Belongs to the azoreductase type 1 family. Homodimer. FMN is required as a cofactor.

The catalysed reaction is 2 a quinone + NADH + H(+) = 2 a 1,4-benzosemiquinone + NAD(+). The enzyme catalyses N,N-dimethyl-1,4-phenylenediamine + anthranilate + 2 NAD(+) = 2-(4-dimethylaminophenyl)diazenylbenzoate + 2 NADH + 2 H(+). Its function is as follows. Quinone reductase that provides resistance to thiol-specific stress caused by electrophilic quinones. Functionally, also exhibits azoreductase activity. Catalyzes the reductive cleavage of the azo bond in aromatic azo compounds to the corresponding amines. This Clostridium perfringens (strain 13 / Type A) protein is FMN-dependent NADH:quinone oxidoreductase 2.